Here is a 261-residue protein sequence, read N- to C-terminus: Ribosome biogenesis protein NSA2 (261 aa).

The segment covering M1–S36 has biased composition (basic and acidic residues). Positions M1 to P87 are disordered. 2 consecutive short sequence motifs (nuclear localization signal) follow at residues G15–E22 and H51–K58. Residues L45 to I65 are compositionally biased toward basic residues.

The protein belongs to the eukaryotic ribosomal protein eS8 family. Ribosome biogenesis protein NSA2 subfamily. Component of the pre-66S ribosomal particle. Interacts with NOP7 and RRP1. Interacts with RSA4 (via WD repeats).

It is found in the nucleus. It localises to the nucleolus. In terms of biological role, involved in the biogenesis of the 60S ribosomal subunit. May play a part in the quality control of pre-60S particles. This is Ribosome biogenesis protein NSA2 (NSA2) from Coccidioides immitis (strain RS) (Valley fever fungus).